The primary structure comprises 713 residues: Early transcription factor 82 kDa subunit (713 aa).

It belongs to the poxviridae VETF large subunit family. In terms of assembly, heterodimer of a 70 kDa and a 82 kDa subunit. Part of the early transcription complex composed of ETF, RAP94, and the DNA-directed RNA polymerase.

Acts with RNA polymerase to initiate transcription from early gene promoters. Is recruited by the RPO-associated protein of 94 kDa (RAP94) to form the early transcription complex, which also contains the core RNA polymerase. ETF heterodimer binds to early gene promoters. The chain is Early transcription factor 82 kDa subunit (VETFL) from Yaba monkey tumor virus (strain VR587) (YMTV).